A 91-amino-acid chain; its full sequence is Acylphosphatase (91 aa).

One can recognise an Acylphosphatase-like domain in the interval 3–91; sequence CLRAIVKGKV…ANYSDFRIKH (89 aa). Residues Arg-18 and Asn-36 contribute to the active site.

Belongs to the acylphosphatase family.

The catalysed reaction is an acyl phosphate + H2O = a carboxylate + phosphate + H(+). The protein is Acylphosphatase (acyP) of Dehalococcoides mccartyi (strain ATCC BAA-2100 / JCM 16839 / KCTC 5957 / BAV1).